The sequence spans 88 residues: UPF0223 protein OB1419 (88 aa).

It belongs to the UPF0223 family.

This is UPF0223 protein OB1419 from Oceanobacillus iheyensis (strain DSM 14371 / CIP 107618 / JCM 11309 / KCTC 3954 / HTE831).